A 223-amino-acid polypeptide reads, in one-letter code: Urease accessory protein UreF (223 aa).

This sequence belongs to the UreF family. UreD, UreF and UreG form a complex that acts as a GTP-hydrolysis-dependent molecular chaperone, activating the urease apoprotein by helping to assemble the nickel containing metallocenter of UreC. The UreE protein probably delivers the nickel.

Its subcellular location is the cytoplasm. Required for maturation of urease via the functional incorporation of the urease nickel metallocenter. This chain is Urease accessory protein UreF, found in Pseudomonas paraeruginosa (strain DSM 24068 / PA7) (Pseudomonas aeruginosa (strain PA7)).